Here is a 355-residue protein sequence, read N- to C-terminus: Molybdenum import ATP-binding protein ModC (355 aa).

Residues 1-233 (MTLIVEAKQR…PSTASDRREA (233 aa)) enclose the ABC transporter domain. ATP is bound at residue 31-38 (GRSGSGKT). The Mop domain occupies 291–355 (GLSALNILEA…AIIKTVALEA (65 aa)).

Belongs to the ABC transporter superfamily. Molybdate importer (TC 3.A.1.8) family. As to quaternary structure, the complex is composed of two ATP-binding proteins (ModC), two transmembrane proteins (ModB) and a solute-binding protein (ModA).

It localises to the cell inner membrane. The catalysed reaction is molybdate(out) + ATP + H2O = molybdate(in) + ADP + phosphate + H(+). Functionally, part of the ABC transporter complex ModABC involved in molybdenum import. Responsible for energy coupling to the transport system. The sequence is that of Molybdenum import ATP-binding protein ModC from Rhizobium johnstonii (strain DSM 114642 / LMG 32736 / 3841) (Rhizobium leguminosarum bv. viciae).